We begin with the raw amino-acid sequence, 639 residues long: Transcription factor phomR' (639 aa).

A DNA-binding region (zn(2)-C6 fungal-type) is located at residues 14–41; the sequence is CWTCRLRRKKCNEGGPPCDNCEARGIHC. 2 disordered regions span residues 58–136 and 476–499; these read REEA…AGTG and LPRSPEKTSSASGKPSHGRKTGPE. Positions 68–108 are enriched in low complexity; it reads SGRGRSYSRSSSTAAAAAPKPAEGAMVTGGSSSSSRGSGSS.

Its subcellular location is the nucleus. Functionally, transcription factor; part of the gene cluster that mediates the biosynthesis of the phomopsins, a group of hexapeptide mycotoxins which infects lupins and causes lupinosis disease in livestock. May play a role in the regulation of the production of phomopsins. This is Transcription factor phomR' from Diaporthe leptostromiformis (Lupinosis disease fungus).